Here is a 123-residue protein sequence, read N- to C-terminus: Dihydroneopterin triphosphate 2'-epimerase (123 aa).

This sequence belongs to the DHNA family. Homooctamer. Dimer of tetramers.

It carries out the reaction 7,8-dihydroneopterin 3'-triphosphate = 7,8-dihydromonapterin 3'-triphosphate. Its function is as follows. Catalyzes the epimerization of carbon 2' of the side chain of 7,8-dihydroneopterin triphosphate (H2NTP) to form 7,8-dihydromonapterin triphosphate (H2MTP). Is required for tetrahydromonapterin biosynthesis. This Pseudomonas aeruginosa (strain ATCC 15692 / DSM 22644 / CIP 104116 / JCM 14847 / LMG 12228 / 1C / PRS 101 / PAO1) protein is Dihydroneopterin triphosphate 2'-epimerase.